The following is a 382-amino-acid chain: Protein phosphatase 1A (382 aa).

Gly-2 carries N-myristoyl glycine lipidation. In terms of domain architecture, PPM-type phosphatase spans 23–291; the sequence is RYGLSSMQGW…DNMSVILICF (269 aa). Mn(2+) contacts are provided by Asp-60, Gly-61, Asp-239, and Asp-282. Ser-375 and Ser-377 each carry phosphoserine.

The protein belongs to the PP2C family. In terms of assembly, monomer. Interacts with SMAD2; the interaction dephosphorylates SMAD2 in its C-terminal SXS motif resulting in disruption of the SMAD2/SMAD4 complex, SMAD2 nuclear export and termination of the TGF-beta-mediated signaling. Interacts with SMAD2; the interaction dephosphorylates SMAD2 in its C-terminal SXS motif resulting in disruption of the SMAD2/SMAD4 complex, SMAD2 nuclear export and termination of the TGF-beta-mediated signaling. Interacts with the phosphorylated form of IKBKB/IKKB. The cofactor is Mg(2+). Mn(2+) is required as a cofactor. Post-translationally, N-myristoylation is essential for the recognition of its substrates for dephosphorylation.

Its subcellular location is the nucleus. The protein localises to the cytoplasm. It localises to the cytosol. The protein resides in the membrane. It carries out the reaction O-phospho-L-seryl-[protein] + H2O = L-seryl-[protein] + phosphate. It catalyses the reaction O-phospho-L-threonyl-[protein] + H2O = L-threonyl-[protein] + phosphate. Its function is as follows. Enzyme with a broad specificity. Negatively regulates TGF-beta signaling through dephosphorylating SMAD2 and SMAD3, resulting in their dissociation from SMAD4, nuclear export of the SMADs and termination of the TGF-beta-mediated signaling. Dephosphorylates PRKAA1 and PRKAA2. Plays an important role in the termination of TNF-alpha-mediated NF-kappa-B activation through dephosphorylating and inactivating IKBKB/IKKB. This is Protein phosphatase 1A (PPM1A) from Bos taurus (Bovine).